A 148-amino-acid chain; its full sequence is Prefoldin subunit alpha (148 aa).

It belongs to the prefoldin subunit alpha family. In terms of assembly, heterohexamer of two alpha and four beta subunits.

The protein localises to the cytoplasm. Molecular chaperone capable of stabilizing a range of proteins. Seems to fulfill an ATP-independent, HSP70-like function in archaeal de novo protein folding. The chain is Prefoldin subunit alpha (pfdA) from Pyrococcus horikoshii (strain ATCC 700860 / DSM 12428 / JCM 9974 / NBRC 100139 / OT-3).